The chain runs to 432 residues: MGVISDAYRLKYTFGVDFGTSYVKYGPITLNEPKMVQTRGLFLRDLPESVKMRIPPDVLARGLVVGDEEVRKYLSSVRDVQRNLKYPLKDGVARRDDEEAWRVLKELARYTLAQFPVSDPEFAGWLVAVALSALAPDYMYKAIFDIYDELASEFKIYAVTILPQPLAVAIAENAVNCVIVEGGHGNIQVAPISFALIREGLVALNRGGAEANAITREILKDIGYSDIAREEYAVEVVKRAVGLVPRRLKEAIRAAKSDPDRFVTKVRLSPVVEVEIPREYAWTRFLIGEIVFDPNHEEIKSYIEQSRLRIENAVIGDVTLYGEMDVASAIITSLRNVSVEIQERVASQIILSGGAFSWRVPPGMEDVAADSVTRVKIALEEKSPALASKVEVRLVSEPQYSVWRGAVIYGYALPLSLEWSDTTREGWRFPRR.

ATP is bound by residues 20 to 24 (TSYVK), 182 to 184 (GGH), 235 to 239 (EVVKR), 354 to 358 (GAFSW), and Q399.

The protein belongs to the actin family. As to quaternary structure, monomer. The crenactin monomers polymerize into right-handed helical filaments, with 8 subunits per complete turn of the helix. Forms single-stranded filaments under high salt concentrations and double-stranded filaments under low salt concentrations. Interacts with arcadin-1 and arcadin-2.

Its subcellular location is the cytoplasm. It is found in the cytoskeleton. It catalyses the reaction ATP + H2O = ADP + phosphate + H(+). Its activity is regulated as follows. Crenactin polymerization is inhibited by interaction with arcadin-2. Also significantly inhibited by elevated antibiotic A22 concentrations. In terms of biological role, forms the backbone of an actin-like archaeal cytoskeleton, which is involved in cell shape determination. Has ATPase activity. Shows highest activity towards ATP or GTP as nucleotide, and only residual activity on UTP, CTP and dNTPs. This is Crenactin from Pyrobaculum calidifontis (strain DSM 21063 / JCM 11548 / VA1).